A 138-amino-acid polypeptide reads, in one-letter code: Basic phospholipase A2 Bs-N6 (138 aa).

A signal peptide spans 1-16 (MRTLWIVAVLLVGVEG). Disulfide bonds link cysteine 42-cysteine 131, cysteine 44-cysteine 60, cysteine 59-cysteine 111, cysteine 65-cysteine 138, cysteine 66-cysteine 104, cysteine 73-cysteine 97, and cysteine 91-cysteine 102. Ca(2+)-binding residues include tyrosine 43, glycine 45, and glycine 47. Residue histidine 63 is part of the active site. Residue aspartate 64 coordinates Ca(2+). Residue aspartate 105 is part of the active site.

Monomer. Requires Ca(2+) as cofactor. In terms of processing, contains 7 disulfide bonds. As to expression, expressed by the venom gland.

The protein localises to the secreted. The enzyme catalyses a 1,2-diacyl-sn-glycero-3-phosphocholine + H2O = a 1-acyl-sn-glycero-3-phosphocholine + a fatty acid + H(+). Functionally, snake venom phospholipase A2 (PLA2) that shows myotoxic activities. PLA2 catalyzes the calcium-dependent hydrolysis of the 2-acyl groups in 3-sn-phosphoglycerides. The chain is Basic phospholipase A2 Bs-N6 from Bothriechis schlegelii (Eyelash palm pitviper).